Reading from the N-terminus, the 24-residue chain is Brevinin-1Sb (24 aa).

C18 and C24 are oxidised to a cystine.

As to expression, expressed by the skin glands.

The protein resides in the secreted. Functionally, antibacterial activity against Gram-negative bacterium E.coli. The chain is Brevinin-1Sb from Lithobates sphenocephalus (Southern leopard frog).